An 83-amino-acid chain; its full sequence is Antitoxin ChpS (83 aa).

Residues 3 to 48 (ITIKRWGNSAGMVIPNIVMKELNLQPGQSVEAQVSNNQLILTPISR) form the SpoVT-AbrB domain.

Belongs to the PemI family. Interacts with ChpB, inhibiting its endoribonuclease activity.

Its function is as follows. Antitoxin component of a type II toxin-antitoxin (TA) system. May be involved in the regulation of cell growth. It acts as a suppressor of the endoribonuclease (inhibitory function) of ChpB protein. Both ChpS and ChpB probably bind to the promoter region of the chpS-chpB operon to autoregulate their synthesis. This is Antitoxin ChpS (chpS) from Escherichia coli (strain K12).